The sequence spans 129 residues: Small ribosomal subunit protein bS16m (129 aa).

The protein belongs to the bacterial ribosomal protein bS16 family. In terms of assembly, component of the mitochondrial ribosome small subunit (28S) which comprises a 12S rRNA and about 30 distinct proteins.

It is found in the mitochondrion. The polypeptide is Small ribosomal subunit protein bS16m (mRpS16) (Drosophila melanogaster (Fruit fly)).